The sequence spans 182 residues: NADH-ubiquinone oxidoreductase 20 kDa subunit (182 aa).

Residues Cys-57, Cys-58, Cys-122, and Cys-152 each contribute to the [4Fe-4S] cluster site.

Belongs to the complex I 20 kDa subunit family. [4Fe-4S] cluster serves as cofactor.

The protein localises to the mitochondrion. It carries out the reaction a ubiquinone + NADH + 5 H(+)(in) = a ubiquinol + NAD(+) + 4 H(+)(out). The protein is NADH-ubiquinone oxidoreductase 20 kDa subunit (NAD10) of Reclinomonas americana.